The chain runs to 207 residues: Fibroblast growth factor 18 (207 aa).

A signal peptide spans 1–27 (MYSAPSTCTCLCLHFLLLCFQVQVLAA). N-linked (GlcNAc...) asparagine glycosylation is present at asparagine 39. Cysteines 109 and 127 form a disulfide. An N-linked (GlcNAc...) asparagine glycan is attached at asparagine 137.

It belongs to the heparin-binding growth factors family. As to quaternary structure, interacts with FGFR3 and FGFR4.

Its subcellular location is the secreted. Plays an important role in the regulation of cell proliferation, cell differentiation and cell migration. Required for normal ossification and bone development. Stimulates hepatic and intestinal proliferation. The polypeptide is Fibroblast growth factor 18 (FGF18) (Bos taurus (Bovine)).